Reading from the N-terminus, the 126-residue chain is Holo-[acyl-carrier-protein] synthase (126 aa).

Residues Asp-6 and Glu-55 each coordinate Mg(2+).

It belongs to the P-Pant transferase superfamily. AcpS family. Mg(2+) is required as a cofactor.

It is found in the cytoplasm. It carries out the reaction apo-[ACP] + CoA = holo-[ACP] + adenosine 3',5'-bisphosphate + H(+). Functionally, transfers the 4'-phosphopantetheine moiety from coenzyme A to a Ser of acyl-carrier-protein. The polypeptide is Holo-[acyl-carrier-protein] synthase (Chlorobium limicola (strain DSM 245 / NBRC 103803 / 6330)).